We begin with the raw amino-acid sequence, 315 residues long: Methionyl-tRNA formyltransferase (315 aa).

111-114 (SLLP) is a binding site for (6S)-5,6,7,8-tetrahydrofolate.

It belongs to the Fmt family.

The enzyme catalyses L-methionyl-tRNA(fMet) + (6R)-10-formyltetrahydrofolate = N-formyl-L-methionyl-tRNA(fMet) + (6S)-5,6,7,8-tetrahydrofolate + H(+). Functionally, attaches a formyl group to the free amino group of methionyl-tRNA(fMet). The formyl group appears to play a dual role in the initiator identity of N-formylmethionyl-tRNA by promoting its recognition by IF2 and preventing the misappropriation of this tRNA by the elongation apparatus. The polypeptide is Methionyl-tRNA formyltransferase (Chlorobium phaeobacteroides (strain DSM 266 / SMG 266 / 2430)).